Here is a 501-residue protein sequence, read N- to C-terminus: Lysine--tRNA ligase (501 aa).

Residues glutamate 411 and glutamate 418 each contribute to the Mg(2+) site.

The protein belongs to the class-II aminoacyl-tRNA synthetase family. In terms of assembly, homodimer. Mg(2+) serves as cofactor.

The protein localises to the cytoplasm. The enzyme catalyses tRNA(Lys) + L-lysine + ATP = L-lysyl-tRNA(Lys) + AMP + diphosphate. The protein is Lysine--tRNA ligase of Shewanella woodyi (strain ATCC 51908 / MS32).